Here is a 2334-residue protein sequence, read N- to C-terminus: Centriolin (2334 aa).

Residues 1–70 (MKKGSERRLS…ESTVPLEPQQ (70 aa)) are disordered. The segment covering 21-38 (PGPSSLRSSMRSRSLSPL) has biased composition (low complexity). 4 LRR repeats span residues 126 to 147 (KLEV…DKLL), 148 to 169 (RLRE…ENMC), 170 to 191 (NLQK…FAKK), and 194 to 215 (SLRV…SKLK). Residues 228–266 (NPVVALPHYLQFIIFHLRSLESLEGQPVTTQDRQEAFER) form the LRRCT domain. Coiled-coil stretches lie at residues 265 to 343 (ERFS…VELT) and 437 to 800 (DLQL…LNHV). Disordered regions lie at residues 542 to 562 (DSLD…RGKE) and 751 to 771 (SLRD…ENNE). Phosphoserine is present on Ser-832. The stretch at 858–1102 (EKEEAQVRER…ITRLRDVLNL (245 aa)) forms a coiled coil. 3 disordered regions span residues 1154-1198 (SKVS…PLPA), 1213-1245 (KSFS…VPPP), and 1338-1360 (LKSK…EEVD). Acidic residues predominate over residues 1227–1238 (SQEESGLDDQEE). Residues 1320-2169 (EHHNLENEVS…MRTLKSEVKD (850 aa)) adopt a coiled-coil conformation. A Phosphoserine modification is found at Ser-1478. Residues 1951-2121 (MMFQKLQKER…ELVAQDNHER (171 aa)) form a required for centrosome localization region. A sufficient for interaction with HOOK2 region spans residues 1988 to 2334 (QKSRLKQLLT…PLEEPNSYRH (347 aa)). Residues 2291-2307 (TSTSTDSASSPSLPSLV) show a composition bias toward low complexity. The interval 2291 to 2334 (TSTSTDSASSPSLPSLVEDSQHGHSQSSFQVLQVPLEEPNSYRH) is disordered.

As to quaternary structure, interacts with HOOK2. Interacts with EXOC6 and SNAPIN. Associates with the exocyst complex. In terms of tissue distribution, highly expressed in liver.

It localises to the cytoplasm. It is found in the cytoskeleton. The protein localises to the microtubule organizing center. Its subcellular location is the centrosome. The protein resides in the midbody. It localises to the midbody ring. Involved in cell cycle progression and cytokinesis. During the late steps of cytokinesis, anchors exocyst and SNARE complexes at the midbody, thereby allowing secretory vesicle-mediated abscission. The sequence is that of Centriolin (Cntrl) from Mus musculus (Mouse).